Here is a 24-residue protein sequence, read N- to C-terminus: Brevinin-1Ba (24 aa).

Cys-18 and Cys-24 are disulfide-bonded.

Expressed by the skin glands.

It is found in the secreted. Functionally, antibacterial activity against Gram-positive bacterium S.aureus. The protein is Brevinin-1Ba of Lithobates berlandieri (Rio Grande leopard frog).